A 1218-amino-acid chain; its full sequence is NACHT, LRR and PYD domains-containing protein 1a allele 3 (1218 aa).

The segment covering 1 to 29 (MGESQSKQESNTRVAQHGSQQDVDPTFQT) has biased composition (polar residues). 2 disordered regions span residues 1-44 (MGES…QVEQ) and 71-91 (EMDH…DRSE). The segment covering 77-87 (RRHSHQSKKKL) has biased composition (basic residues). Residues 175–484 (QLVIIEGAAG…EFFAAMSYIL (310 aa)) form the NACHT domain. 181–188 (GAAGIGKS) contacts ATP. LRR repeat units lie at residues 343–364 (KERN…LTLC), 673–693 (NLEE…RSLC), and 730–750 (RLAE…RQLC). Polar residues predominate over residues 799–815 (TMPTENTDGEESLTSSK). Positions 799 to 842 (TMPTENTDGEESLTSSKQQQQQSGDKHMEPLGTDDDFWGPSGPV) are disordered. Residues 835 to 968 (FWGPSGPVST…HFAVLENPSF (134 aa)) are ZU5. Residues 835 to 1118 (FWGPSGPVST…LRPALPRMAS (284 aa)) form the FIIND domain. A UPA region spans residues 969-1118 (SPMGVLLRMI…LRPALPRMAS (150 aa)). A CARD domain is found at 1122-1211 (DAPALLHFVD…HLIMDLLEKS (90 aa)).

Belongs to the NLRP family. As to quaternary structure, interacts (via LRR repeats) with BCL2 and BCL2L1 (via the loop between motifs BH4 and BH3). Interacts with NOD2; this interaction is enhanced in the presence of muramyl dipeptide (MDP) and increases IL1B release. Interacts with EIF2AK2/PKR; this interaction requires EIF2AK2 activity, is accompanied by EIF2AK2 autophosphorylation and promotes inflammasome assembly in response to danger-associated signals. Interacts with MEFV; this interaction targets Nlrp1a to degradation by autophagy, hence preventing excessive IL1B- and IL18-mediated inflammation. Interacts with DPP9; leading to inhibit activation of the inflammasome. DPP9 acts via formation of a ternary complex, composed of a DPP9 homodimer, one full-length NLRP1 protein, and one cleaved C-terminus of Nlrp1a (NACHT, LRR and PYD domains-containing protein 1a, C-terminus). Interacts with DPP8; leading to inhibit activation of the inflammasome, probably via formation of a ternary complex with DPP8. Interacts with the C-terminal part of Nlrp1a (NACHT, LRR and PYD domains-containing protein 1a, C-terminus) in absence of pathogens and other damage-associated signals. In terms of assembly, interacts with the N-terminal part of Nlrp1a (NACHT, LRR and PYD domains-containing protein 1a, N-terminus) in absence of pathogens and other damage-associated signals. Homomultimer; forms the Nlrp1a inflammasome polymeric complex, a filament composed of homopolymers of this form in response to pathogens and other damage-associated signals. The Nlrp1a inflammasome polymeric complex directly recruits pro-caspase-1 (proCASP1) independently of PYCARD/ASC. Interacts (via CARD domain) with CASP1 (via CARD domain); leading to CASP1 activation. Autocatalytically cleaved. Autocatalytic cleavage in FIIND region occurs constitutively, prior to activation signals, and is required for inflammasome activity (IL1B release), possibly by facilitating CASP1 binding. Both N- and C-terminal parts remain associated non-covalently. Post-translationally, ubiquitinated in response to pathogen-associated signals, leading to its degradation by the proteasome and subsequent release of the cleaved C-terminal part of the protein (NACHT, LRR and PYD domains-containing protein 1a, C-terminus), which polymerizes and forms the Nlrp1a inflammasome.

It is found in the cytoplasm. The protein resides in the cytosol. It localises to the nucleus. Its subcellular location is the inflammasome. Its activity is regulated as follows. Activated by pathogens and other damage-associated signals: activation promotes ubiquitination and degradation of the N-terminal part, releasing the cleaved C-terminal part of the protein (NACHT, LRR and PYD domains-containing protein 1a, C-terminus), which polymerizes and forms the Nlrp1a inflammasome. Nlrp1a inflammasome is inhibited by DPP8 and DPP9, which sequester the C-terminal fragment of Nlrp1a (NACHT, LRR and PYD domains-containing protein 1a, C-terminus) in a ternary complex, thereby preventing Nlrp1a oligomerization and activation. Nlrp1a inflammasome is strongly activated by Val-boroPro (Talabostat, PT-100), an inhibitor of dipeptidyl peptidases DPP8 and DPP9. Val-boroPro relieves inhibition of DPP8 and/or DPP9 by promoting disruption of the ternary complex, releasing its C-terminal part from autoinhibition. Not activated by cleavage by B.anthracis lethal toxin (LT) endopeptidase. In terms of biological role, acts as the sensor component of the Nlrp1a inflammasome, which mediates inflammasome activation in response to various pathogen-associated signals, leading to subsequent pyroptosis. Inflammasomes are supramolecular complexes that assemble in the cytosol in response to pathogens and other damage-associated signals and play critical roles in innate immunity and inflammation. Acts as a recognition receptor (PRR): recognizes specific pathogens and other damage-associated signals, such as Val-boroPro inhibitor, and mediates the formation of the inflammasome polymeric complex. In response to pathogen-associated signals, the N-terminal part of Nlrp1a is degraded by the proteasome, releasing the cleaved C-terminal part of the protein (NACHT, LRR and PYD domains-containing protein 1a, C-terminus), which polymerizes to initiate the formation of the inflammasome complex: the inflammasome directly recruits pro-caspase-1 (proCASP1) independently of PYCARD/ASC and promotes caspase-1 (CASP1) activation, which subsequently cleaves and activates inflammatory cytokines IL1B and IL18 and gasdermin-D (GSDMD), leading to pyroptosis. In the absence of GSDMD expression, the Nlrp1a inflammasome is able to recruit and activate CASP8, leading to activation of gasdermin-E (GSDME). Functionally, constitutes the precursor of the Nlrp1a inflammasome, which mediates autoproteolytic processing within the FIIND domain to generate the N-terminal and C-terminal parts, which are associated non-covalently in absence of pathogens and other damage-associated signals. Its function is as follows. Regulatory part that prevents formation of the Nlrp1a inflammasome: in absence of pathogens and other damage-associated signals, interacts with the C-terminal part of Nlrp1a (NACHT, LRR and PYD domains-containing protein 1a, C-terminus), preventing activation of the Nlrp1a inflammasome. In response to pathogen-associated signals, this part is ubiquitinated by the N-end rule pathway and degraded by the proteasome, releasing the cleaved C-terminal part of the protein, which polymerizes and forms the Nlrp1a inflammasome. Constitutes the active part of the Nlrp1a inflammasome. In absence of pathogens and other damage-associated signals, interacts with the N-terminal part of Nlrp1a (NACHT, LRR and PYD domains-containing protein 1a, N-terminus), preventing activation of the Nlrp1a inflammasome. In response to pathogen-associated signals, the N-terminal part of Nlrp1a is degraded by the proteasome, releasing this form, which polymerizes to form the Nlrp1a inflammasome complex: the Nlrp1a inflammasome complex then directly recruits pro-caspase-1 (proCASP1) and promotes caspase-1 (CASP1) activation, leading to gasdermin-D (GSDMD) cleavage and subsequent pyroptosis. The sequence is that of NACHT, LRR and PYD domains-containing protein 1a allele 3 from Rattus norvegicus (Rat).